The chain runs to 265 residues: Tryptophan synthase alpha chain (265 aa).

Active-site proton acceptor residues include glutamate 49 and aspartate 60.

This sequence belongs to the TrpA family. As to quaternary structure, tetramer of two alpha and two beta chains.

It carries out the reaction (1S,2R)-1-C-(indol-3-yl)glycerol 3-phosphate + L-serine = D-glyceraldehyde 3-phosphate + L-tryptophan + H2O. It participates in amino-acid biosynthesis; L-tryptophan biosynthesis; L-tryptophan from chorismate: step 5/5. Functionally, the alpha subunit is responsible for the aldol cleavage of indoleglycerol phosphate to indole and glyceraldehyde 3-phosphate. This is Tryptophan synthase alpha chain from Ralstonia nicotianae (strain ATCC BAA-1114 / GMI1000) (Ralstonia solanacearum).